Reading from the N-terminus, the 484-residue chain is Regulator of G-protein signaling 9 (484 aa).

A DEP domain is found at 30–105; the sequence is PDTGVKTQSQ…PDSSLYRFQT (76 aa). Positions 219-280 constitute a G protein gamma domain; sequence ITAVKKEIMY…ITDDTQFWDL (62 aa). The RGS domain maps to 299–414; sequence NFSELIRDPK…LKSPIYKEML (116 aa).

In terms of assembly, heterodimer with Gbeta5. Interacts with RGS7BP, leading to regulate the subcellular location of the heterodimer formed with Gbeta5. Component of the RGS9-1-Gbeta5 complex composed of RGS9 (RGS9-1), Gbeta5 (GNB5) and RGS9BP. Post-translationally, phosphorylation is decreased by light exposition.

The protein localises to the membrane. Functionally, inhibits signal transduction by increasing the GTPase activity of G protein alpha subunits thereby driving them into their inactive GDP-bound form. Binds to G(t)-alpha. Involved in phototransduction; key element in the recovery phase of visual transduction. The polypeptide is Regulator of G-protein signaling 9 (Tamias striatus (Eastern chipmunk)).